A 315-amino-acid polypeptide reads, in one-letter code: Acetyl-coenzyme A carboxylase carboxyl transferase subunit alpha (315 aa).

The region spanning 32–293 is the CoA carboxyltransferase C-terminal domain; it reads NISDEIARLQ…RADLVQQLDM (262 aa).

It belongs to the AccA family. As to quaternary structure, acetyl-CoA carboxylase is a heterohexamer composed of biotin carboxyl carrier protein (AccB), biotin carboxylase (AccC) and two subunits each of ACCase subunit alpha (AccA) and ACCase subunit beta (AccD).

It localises to the cytoplasm. The catalysed reaction is N(6)-carboxybiotinyl-L-lysyl-[protein] + acetyl-CoA = N(6)-biotinyl-L-lysyl-[protein] + malonyl-CoA. Its pathway is lipid metabolism; malonyl-CoA biosynthesis; malonyl-CoA from acetyl-CoA: step 1/1. Its function is as follows. Component of the acetyl coenzyme A carboxylase (ACC) complex. First, biotin carboxylase catalyzes the carboxylation of biotin on its carrier protein (BCCP) and then the CO(2) group is transferred by the carboxyltransferase to acetyl-CoA to form malonyl-CoA. The protein is Acetyl-coenzyme A carboxylase carboxyl transferase subunit alpha of Pseudomonas putida (strain ATCC 47054 / DSM 6125 / CFBP 8728 / NCIMB 11950 / KT2440).